Here is a 272-residue protein sequence, read N- to C-terminus: Phosphate import ATP-binding protein PstB 1 (272 aa).

In terms of domain architecture, ABC transporter spans 26-267 (LEIRNLDLRY…PKKRKTEDYI (242 aa)). Residue 58–65 (GPSGCGKS) coordinates ATP.

Belongs to the ABC transporter superfamily. Phosphate importer (TC 3.A.1.7) family. The complex is composed of two ATP-binding proteins (PstB), two transmembrane proteins (PstC and PstA) and a solute-binding protein (PstS).

It localises to the cell inner membrane. It catalyses the reaction phosphate(out) + ATP + H2O = ADP + 2 phosphate(in) + H(+). Part of the ABC transporter complex PstSACB involved in phosphate import. Responsible for energy coupling to the transport system. The protein is Phosphate import ATP-binding protein PstB 1 of Shewanella oneidensis (strain ATCC 700550 / JCM 31522 / CIP 106686 / LMG 19005 / NCIMB 14063 / MR-1).